The sequence spans 649 residues: Acetyl-coenzyme A synthetase (649 aa).

Residues 189–192 (RGGK), Thr-311, and Asn-335 contribute to the CoA site. Residues 387–389 (GEP), 411–416 (DTWWQT), Asp-500, and Arg-515 each bind ATP. Ser-523 is a CoA binding site. Arg-526 contacts ATP. Mg(2+) is bound by residues Val-537, His-539, and Val-542. Arg-584 lines the CoA pocket. The residue at position 609 (Lys-609) is an N6-acetyllysine.

It belongs to the ATP-dependent AMP-binding enzyme family. It depends on Mg(2+) as a cofactor. In terms of processing, acetylated. Deacetylation by the SIR2-homolog deacetylase activates the enzyme.

The enzyme catalyses acetate + ATP + CoA = acetyl-CoA + AMP + diphosphate. Its function is as follows. Catalyzes the conversion of acetate into acetyl-CoA (AcCoA), an essential intermediate at the junction of anabolic and catabolic pathways. AcsA undergoes a two-step reaction. In the first half reaction, AcsA combines acetate with ATP to form acetyl-adenylate (AcAMP) intermediate. In the second half reaction, it can then transfer the acetyl group from AcAMP to the sulfhydryl group of CoA, forming the product AcCoA. This Sinorhizobium medicae (strain WSM419) (Ensifer medicae) protein is Acetyl-coenzyme A synthetase.